The sequence spans 86 residues: Anti-adapter protein IraP (86 aa).

Residues 1–36 adopt a coiled-coil conformation; the sequence is MKNLIAELLFKLAQKEEESKELCAQVEALEIIVTAM.

Belongs to the IraP family. As to quaternary structure, interacts with RssB.

Its subcellular location is the cytoplasm. Inhibits RpoS proteolysis by regulating RssB activity, thereby increasing the stability of the sigma stress factor RpoS especially during phosphate starvation, but also in stationary phase and during nitrogen starvation. Its effect on RpoS stability is due to its interaction with RssB, which probably blocks the interaction of RssB with RpoS, and the consequent delivery of the RssB-RpoS complex to the ClpXP protein degradation pathway. This chain is Anti-adapter protein IraP, found in Escherichia coli (strain SE11).